The chain runs to 172 residues: Gastrula zinc finger protein XlCGF51.1A (172 aa).

6 C2H2-type zinc fingers span residues 6–28, 34–56, 62–84, 90–112, 122–144, and 150–172; these read FSCSDCGARFTYRSLLRRHNKIH, LICSECGKPFTSESALTAHQRSH, FSCTDCEKCFAQRMHLIEHQRTH, FSCTVCGEMFTYRAQFSKHMLKH, LDCSHCGKHFTSRSDLTVHRKSH, and LQCSDCGKCFKYQSQLASHQRVH.

The protein belongs to the krueppel C2H2-type zinc-finger protein family.

It localises to the nucleus. In terms of biological role, may be involved in transcriptional regulation. This Xenopus laevis (African clawed frog) protein is Gastrula zinc finger protein XlCGF51.1A.